Consider the following 308-residue polypeptide: Porphobilinogen deaminase (308 aa).

Residue C241 is modified to S-(dipyrrolylmethanemethyl)cysteine.

Belongs to the HMBS family. As to quaternary structure, monomer. Dipyrromethane is required as a cofactor.

The enzyme catalyses 4 porphobilinogen + H2O = hydroxymethylbilane + 4 NH4(+). Its pathway is porphyrin-containing compound metabolism; protoporphyrin-IX biosynthesis; coproporphyrinogen-III from 5-aminolevulinate: step 2/4. Functionally, tetrapolymerization of the monopyrrole PBG into the hydroxymethylbilane pre-uroporphyrinogen in several discrete steps. In Exiguobacterium sibiricum (strain DSM 17290 / CCUG 55495 / CIP 109462 / JCM 13490 / 255-15), this protein is Porphobilinogen deaminase.